We begin with the raw amino-acid sequence, 338 residues long: Fructose-1,6-bisphosphatase class 1 (338 aa).

Residues Glu-94, Asp-116, Leu-118, and Asp-119 each coordinate Mg(2+). Residues 119–122, Asn-210, and Lys-276 each bind substrate; that span reads DGSS. Mg(2+) is bound at residue Glu-282.

It belongs to the FBPase class 1 family. As to quaternary structure, homotetramer. Requires Mg(2+) as cofactor.

The protein resides in the cytoplasm. It catalyses the reaction beta-D-fructose 1,6-bisphosphate + H2O = beta-D-fructose 6-phosphate + phosphate. The protein operates within carbohydrate biosynthesis; gluconeogenesis. The polypeptide is Fructose-1,6-bisphosphatase class 1 (Burkholderia mallei (strain NCTC 10247)).